Consider the following 232-residue polypeptide: Very-long-chain (3R)-3-hydroxyacyl-CoA dehydratase 4 (232 aa).

Residues 1–19 (MGPSVLPAWLQPRYRKNVY) are Cytoplasmic-facing. A helical membrane pass occupies residues 20–40 (LFIYYLIQFCGHSWILANMTV). Residues 41-56 (RFFSFGKDSMADTFYA) are Lumenal-facing. Residues 57–77 (IGLVMRVCQSISLLELLHIYI) form a helical membrane-spanning segment. Over 78 to 112 (GIESNQLFPRFLQLTERVIILFGVITSQEEVQEKC) the chain is Cytoplasmic. Residues 113 to 133 (VVCVLFILWNLLDMVRYTYSM) form a helical membrane-spanning segment. The Lumenal portion of the chain corresponds to 134–135 (LS). The helical transmembrane segment at 136–156 (VIGTSYAALTWLSQTLWMPIY) threads the bilayer. The active site involves Y156. Position 157 (P157) is a topological domain, cytoplasmic. Residues 158–178 (LCVLAEAFTIYQSLPYFESFG) traverse the membrane as a helical segment. Residue E163 is part of the active site. Topologically, residues 179 to 189 (TNSTVLPFDLS) are lumenal. Residues 190–210 (TCFPYVLKLYLMMLFIGMYFT) form a helical membrane-spanning segment. Over 211-232 (YSHLYTERKDFLRVFSVKQKNV) the chain is Cytoplasmic.

Belongs to the very long-chain fatty acids dehydratase HACD family. As to quaternary structure, may interact with enzymes of the ELO family (including ELOVL1); with those enzymes that mediate condensation, the first of the four steps of the reaction cycle responsible for fatty acids elongation, may be part of a larger fatty acids elongase complex.

It localises to the endoplasmic reticulum membrane. The catalysed reaction is a very-long-chain (3R)-3-hydroxyacyl-CoA = a very-long-chain (2E)-enoyl-CoA + H2O. It carries out the reaction (3R)-hydroxyhexadecanoyl-CoA = (2E)-hexadecenoyl-CoA + H2O. The protein operates within lipid metabolism; fatty acid biosynthesis. In terms of biological role, catalyzes the third of the four reactions of the long-chain fatty acids elongation cycle. This endoplasmic reticulum-bound enzymatic process, allows the addition of two carbons to the chain of long- and very long-chain fatty acids/VLCFAs per cycle. This enzyme catalyzes the dehydration of the 3-hydroxyacyl-CoA intermediate into trans-2,3-enoyl-CoA, within each cycle of fatty acid elongation. Thereby, it participates in the production of VLCFAs of different chain lengths that are involved in multiple biological processes as precursors of membrane lipids and lipid mediators. This Mus musculus (Mouse) protein is Very-long-chain (3R)-3-hydroxyacyl-CoA dehydratase 4.